Consider the following 1154-residue polypeptide: DNA-directed RNA polymerase subunit beta' (1154 aa).

4 residues coordinate Zn(2+): cysteine 60, cysteine 62, cysteine 75, and cysteine 78. Mg(2+)-binding residues include aspartate 449, aspartate 451, and aspartate 453. Zn(2+) is bound by residues cysteine 774, cysteine 848, cysteine 855, and cysteine 858.

This sequence belongs to the RNA polymerase beta' chain family. The RNAP catalytic core consists of 2 alpha, 1 beta, 1 beta' and 1 omega subunit. When a sigma factor is associated with the core the holoenzyme is formed, which can initiate transcription. Requires Mg(2+) as cofactor. Zn(2+) is required as a cofactor.

The catalysed reaction is RNA(n) + a ribonucleoside 5'-triphosphate = RNA(n+1) + diphosphate. Functionally, DNA-dependent RNA polymerase catalyzes the transcription of DNA into RNA using the four ribonucleoside triphosphates as substrates. In Desulforudis audaxviator (strain MP104C), this protein is DNA-directed RNA polymerase subunit beta'.